Here is a 276-residue protein sequence, read N- to C-terminus: RRP15-like protein (276 aa).

2 disordered regions span residues 1–132 (MALL…QLRV) and 201–276 (KRAK…DGEE). 2 stretches are compositionally biased toward basic and acidic residues: residues 75-95 (FQKD…KADV) and 226-245 (KGSS…DFMT). A compositionally biased stretch (acidic residues) spans 254–276 (EEDDDEEGHNDEADDSDYDDGEE). Ser-269 carries the phosphoserine modification. Tyr-271 is modified (phosphotyrosine).

Belongs to the RRP15 family.

This Drosophila melanogaster (Fruit fly) protein is RRP15-like protein.